Reading from the N-terminus, the 352-residue chain is Protein TIFY 6B (352 aa).

Residues 1 to 71 (MERDFLGLGS…KSGNYHLPHS (71 aa)) are disordered. A compositionally biased stretch (basic and acidic residues) spans 17-26 (VKEETSESSR). The segment covering 34–54 (MNWSFSNKVSASSSQFLSFRP) has biased composition (polar residues). Residues 172–207 (PIGSPAQLTIFYAGSVCVYDDISPEKAKAIMLLAGN) enclose the Tify domain. Residues 302–326 (PLARKASLARFLEKRKERVTSVSPY) carry the Jas motif. Positions 304 to 311 (ARKASLAR) match the Nuclear localization signal motif.

The protein belongs to the TIFY/JAZ family. As to quaternary structure, homo- and heterodimer. Interacts with COI1, MYC2, MYC3, MYC4, TIFY10A/JAZ1, TIFY10B/JAZ2, TIFY6A/JAZ4, TIFY5A/JAZ8, TIFY7/JAZ9, TIFY9/JAZ10 and TIFY3A/JAZ11. Interacts (via TIFY domain) with AFPH2/NINJA. Post-translationally, ubiquitinated. Targeted for degradation by the SCF(COI1) E3 ubiquitin ligase-proteasome pathway during jasmonate signaling. As to expression, srtongly expressed in root tips.

The protein resides in the nucleus. In terms of biological role, repressor of jasmonate responses. Jasmonoyl-isoleucine (JA-Ile) specifically promotes COI1-TIFY6B/JAZ3 interaction. Acts as a negative regulator of MYC2 function. Feed-back regulated by MYC2. This is Protein TIFY 6B (TIFY6B) from Arabidopsis thaliana (Mouse-ear cress).